The following is a 311-amino-acid chain: Ferrochelatase (311 aa).

Fe cation-binding residues include histidine 179 and glutamate 260.

It belongs to the ferrochelatase family.

Its subcellular location is the cytoplasm. The catalysed reaction is heme b + 2 H(+) = protoporphyrin IX + Fe(2+). It functions in the pathway porphyrin-containing compound metabolism; protoheme biosynthesis; protoheme from protoporphyrin-IX: step 1/1. In terms of biological role, catalyzes the ferrous insertion into protoporphyrin IX. The protein is Ferrochelatase of Helicobacter hepaticus (strain ATCC 51449 / 3B1).